The primary structure comprises 360 residues: NAD(P)H-quinone oxidoreductase subunit 1, chloroplastic (360 aa).

Helical transmembrane passes span 30-50 (FLPI…LVWL), 98-118 (FSIG…VIPF), 127-147 (FNIG…GLLM), 165-185 (AAQS…ISLL), 203-223 (FWGW…ISSL), 253-273 (FGLF…FVTV), 297-317 (IFGT…FLFI), and 340-360 (FLLP…VFSL).

This sequence belongs to the complex I subunit 1 family. As to quaternary structure, NDH is composed of at least 16 different subunits, 5 of which are encoded in the nucleus.

It localises to the plastid. The protein localises to the chloroplast thylakoid membrane. It catalyses the reaction a plastoquinone + NADH + (n+1) H(+)(in) = a plastoquinol + NAD(+) + n H(+)(out). It carries out the reaction a plastoquinone + NADPH + (n+1) H(+)(in) = a plastoquinol + NADP(+) + n H(+)(out). In terms of biological role, NDH shuttles electrons from NAD(P)H:plastoquinone, via FMN and iron-sulfur (Fe-S) centers, to quinones in the photosynthetic chain and possibly in a chloroplast respiratory chain. The immediate electron acceptor for the enzyme in this species is believed to be plastoquinone. Couples the redox reaction to proton translocation, and thus conserves the redox energy in a proton gradient. The protein is NAD(P)H-quinone oxidoreductase subunit 1, chloroplastic of Aethionema cordifolium (Lebanon stonecress).